Consider the following 505-residue polypeptide: L-carnitine/gamma-butyrobetaine antiporter (505 aa).

12 consecutive transmembrane segments (helical) span residues 10–30, 50–70, 92–112, 143–163, 195–215, 231–251, 263–283, 316–336, 347–367, 403–423, 446–466, and 475–495; these read IEPKVFFPPLIIVGILCWLTV, IWGWAFEWYMVVMLIGWFWLV, IFMMFASCTSAAVLFWGSIEI, GPLPWATYSFLSVAFAYFFFV, FYLVALIFAMGTSLGLATPLV, LDAIIITCWIILNAICVACGL, SYLSFLMLGWVFIVSGASFIM, WTVFYWAWWVIYAIQMSIFLA, LCFGMVLGLTASTWILWTVLG, LSTATMWGFFILCFIATVTLI, LLVRIGWSVLVGIIGIVLLAL, and AIIAGGCPLFFVNIMVTLSFI.

Belongs to the BCCT transporter (TC 2.A.15) family. CaiT subfamily. As to quaternary structure, homotrimer.

The protein localises to the cell inner membrane. The enzyme catalyses 4-(trimethylamino)butanoate(in) + (R)-carnitine(out) = 4-(trimethylamino)butanoate(out) + (R)-carnitine(in). It participates in amine and polyamine metabolism; carnitine metabolism. Catalyzes the exchange of L-carnitine for gamma-butyrobetaine. The chain is L-carnitine/gamma-butyrobetaine antiporter from Salmonella arizonae (strain ATCC BAA-731 / CDC346-86 / RSK2980).